Reading from the N-terminus, the 343-residue chain is SH2 domain-containing adapter protein D (343 aa).

A disordered region spans residues 1–176; sequence MAKWLRDYLN…PADEYDQPWE (176 aa). 2 stretches are compositionally biased toward basic and acidic residues: residues 29 to 40 and 73 to 82; these read DILRAYREQKDL and IKVEAADMAR. The span at 92 to 102 shows a compositional bias: acidic residues; that stretch reads EEPEAETEYSD. Residues 160–176 show a composition bias toward basic and acidic residues; sequence RPLEDERPADEYDQPWE. Residues 225 to 320 form the SH2 domain; it reads WFHGPLSRAE…AEHLALLYPV (96 aa). The interval 322–343 is disordered; that stretch reads SSQSSQGPCTLAAKPERGQGDP.

Post-translationally, tyrosine phosphorylated by ABL. As to expression, specifically expressed in brain.

Functionally, may function as an adapter protein. In Mus musculus (Mouse), this protein is SH2 domain-containing adapter protein D (Shd).